The sequence spans 132 residues: Transthyretin-like protein 16 (132 aa).

A signal peptide spans 1 to 19 (MRSLVVCLLLAACALECTA). Asparagine 23 carries an N-linked (GlcNAc...) asparagine glycan.

This sequence belongs to the nematode transthyretin-like family.

The protein resides in the secreted. The chain is Transthyretin-like protein 16 (ttr-16) from Caenorhabditis elegans.